The chain runs to 630 residues: 1-deoxy-D-xylulose-5-phosphate synthase (630 aa).

Thiamine diphosphate is bound by residues H72 and 113–115 (GHS). D144 serves as a coordination point for Mg(2+). Residues 145-146 (GA), N173, Y284, and E367 contribute to the thiamine diphosphate site. Position 173 (N173) interacts with Mg(2+).

The protein belongs to the transketolase family. DXPS subfamily. In terms of assembly, homodimer. Mg(2+) is required as a cofactor. The cofactor is thiamine diphosphate.

It carries out the reaction D-glyceraldehyde 3-phosphate + pyruvate + H(+) = 1-deoxy-D-xylulose 5-phosphate + CO2. It functions in the pathway metabolic intermediate biosynthesis; 1-deoxy-D-xylulose 5-phosphate biosynthesis; 1-deoxy-D-xylulose 5-phosphate from D-glyceraldehyde 3-phosphate and pyruvate: step 1/1. Catalyzes the acyloin condensation reaction between C atoms 2 and 3 of pyruvate and glyceraldehyde 3-phosphate to yield 1-deoxy-D-xylulose-5-phosphate (DXP). The chain is 1-deoxy-D-xylulose-5-phosphate synthase from Bacillus mycoides (strain KBAB4) (Bacillus weihenstephanensis).